Reading from the N-terminus, the 304-residue chain is Ribonuclease Z (304 aa).

Zn(2+) is bound by residues histidine 63, histidine 65, aspartate 67, histidine 68, histidine 141, aspartate 208, and histidine 266. The active-site Proton acceptor is aspartate 67.

It belongs to the RNase Z family. As to quaternary structure, homodimer. It depends on Zn(2+) as a cofactor.

The enzyme catalyses Endonucleolytic cleavage of RNA, removing extra 3' nucleotides from tRNA precursor, generating 3' termini of tRNAs. A 3'-hydroxy group is left at the tRNA terminus and a 5'-phosphoryl group is left at the trailer molecule.. Its function is as follows. Zinc phosphodiesterase, which displays some tRNA 3'-processing endonuclease activity. Probably involved in tRNA maturation, by removing a 3'-trailer from precursor tRNA. The protein is Ribonuclease Z of Chlamydia trachomatis serovar D (strain ATCC VR-885 / DSM 19411 / UW-3/Cx).